The following is a 1088-amino-acid chain: Serine/threonine-protein kinase LATS2 (1088 aa).

The disordered stretch occupies residues glutamate 24–alanine 49. Serine 83 is modified (phosphoserine; by AURKA). A UBA domain is found at glutamate 98 to methionine 139. The interaction with ubiquitinated AMOTL2 stretch occupies residues arginine 101–tyrosine 141. Residues arginine 271–proline 280 show a composition bias toward polar residues. The disordered stretch occupies residues arginine 271–proline 323. Threonine 279 bears the Phosphothreonine mark. Serine 380 is modified (phosphoserine). 2 disordered regions span residues lysine 383 to alanine 428 and proline 454 to glycine 483. Polar residues predominate over residues serine 404–glutamine 413. Over residues valine 466–alanine 478 the composition is skewed to pro residues. A PPxY motif motif is present at residues proline 515–tyrosine 518. Residues serine 543 to serine 592 form a disordered region. Over residues glycine 553–glutamine 572 the composition is skewed to basic and acidic residues. Position 576 is a phosphoserine (serine 576). Basic and acidic residues predominate over residues asparagine 583 to serine 592. The 306-residue stretch at phenylalanine 668–phenylalanine 973 folds into the Protein kinase domain. Residues leucine 674–valine 682 and lysine 697 each bind ATP. Aspartate 791 functions as the Proton acceptor in the catalytic mechanism. The AGC-kinase C-terminal domain maps to serine 974–proline 1052. The segment at serine 994–tryptophan 1022 is disordered. Phosphothreonine is present on threonine 1041. Residues proline 1056–valine 1088 form a disordered region.

It belongs to the protein kinase superfamily. AGC Ser/Thr protein kinase family. In terms of assembly, interacts with and is phosphorylated by AURKA. Binds to AR. Interacts with AJUBA during mitosis and this complex regulates organization of the spindle apparatus through recruitment of gamma-tubulin to the centrosome. Interacts (via PPxY motif) with YAP1 (via WW domains). Interacts with MOB1A and MOB1B. Interacts with LIMD1, WTIP and AJUBA. Interacts with SNAI1. Interacts with WWC1, WWC2 and WWC3 (via their WW domains). Interacts (via UBA domain) with ubiquitinated AMOTL2; the interaction promotes LATS2 phosphorylation of YAP1. The cofactor is Mg(2+). Autophosphorylated and phosphorylated during M-phase and the G1/S-phase of the cell cycle. Phosphorylated and activated by STK3/MST2. Phosphorylated by MAP4Ks; in parallel to STK3/MST2 and resulting to its activation. Phosphorylation by NUAK2 may regulate its activity in phosphorylation and inactivation YAP1. Expressed at high levels in heart and skeletal muscle and at lower levels in all other tissues examined.

The protein resides in the cytoplasm. The protein localises to the cytoskeleton. It is found in the microtubule organizing center. Its subcellular location is the centrosome. It localises to the spindle pole. The protein resides in the nucleus. The catalysed reaction is L-seryl-[protein] + ATP = O-phospho-L-seryl-[protein] + ADP + H(+). It carries out the reaction L-threonyl-[protein] + ATP = O-phospho-L-threonyl-[protein] + ADP + H(+). Its function is as follows. Negative regulator of YAP1 in the Hippo signaling pathway that plays a pivotal role in organ size control and tumor suppression by restricting proliferation and promoting apoptosis. The core of this pathway is composed of a kinase cascade wherein STK3/MST2 and STK4/MST1, in complex with its regulatory protein SAV1, phosphorylates and activates LATS1/2 in complex with its regulatory protein MOB1, which in turn phosphorylates and inactivates YAP1 oncoprotein and WWTR1/TAZ. Phosphorylation of YAP1 by LATS2 inhibits its translocation into the nucleus to regulate cellular genes important for cell proliferation, cell death, and cell migration. Also phosphorylates YAP1 in response to cell contact inhibition-driven WWP1 ubiquitination of AMOTL2, which results in LATS2 activation. Acts as a tumor suppressor which plays a critical role in centrosome duplication, maintenance of mitotic fidelity and genomic stability. Negatively regulates G1/S transition by down-regulating cyclin E/CDK2 kinase activity. Negative regulator of the androgen receptor. Phosphorylates SNAI1 in the nucleus leading to its nuclear retention and stabilization, which enhances its epithelial-mesenchymal transition and tumor cell invasion/migration activities. This tumor-promoting activity is independent of its effects upon YAP1 or WWTR1/TAZ. Acts as an activator of the NLRP3 inflammasome by mediating phosphorylation of 'Ser-265' of NLRP3 following NLRP3 palmitoylation, promoting NLRP3 activation by NEK7. This Homo sapiens (Human) protein is Serine/threonine-protein kinase LATS2.